A 622-amino-acid polypeptide reads, in one-letter code: Deoxynucleoside triphosphate triphosphohydrolase SAMHD1 (622 aa).

One can recognise an SAM domain in the interval 26–89 (WDVEDTVAYL…LHCLQKLSQI (64 aa)). Residues lysine 95 and valine 96 each coordinate GTP. Asparagine 98 serves as a coordination point for dGTP. Residues aspartate 116, glutamine 121, and arginine 124 each contribute to the GTP site. The dGTP site is built by glutamine 128, leucine 129, valine 135, and arginine 143. A dATP-binding site is contributed by glutamine 128. DCTP is bound at residue glutamine 128. Residue glutamine 128 coordinates dTTP. DATP is bound at residue arginine 143. Arginine 143 serves as a coordination point for dCTP. Residue arginine 143 coordinates dTTP. The 154-residue stretch at 143 to 296 (RFEHSIGVGY…GIDVDKWDYF (154 aa)) folds into the HD domain. Mn(2+) contacts are provided by histidine 146, histidine 185, and aspartate 186. 2 residues coordinate dATP: histidine 189 and histidine 194. Residues histidine 189 and histidine 194 each contribute to the dCTP site. Residues histidine 189 and histidine 194 each contribute to the dTTP site. Histidine 212 is a catalytic residue. Aspartate 291 contacts Mn(2+). The dGTP site is built by lysine 292, tyrosine 295, aspartate 299, arginine 313, arginine 332, lysine 334, asparagine 338, arginine 346, tyrosine 354, glutamine 355, histidine 356, and lysine 357. DATP-binding residues include lysine 292, tyrosine 295, and aspartate 299. Positions 292, 295, and 299 each coordinate dCTP. DTTP-binding residues include lysine 292, tyrosine 295, and aspartate 299. Arginine 346 serves as a coordination point for dATP. Arginine 346 contacts dCTP. Residue glutamine 355 participates in dATP binding. Glutamine 355 lines the dCTP pocket. A dTTP-binding site is contributed by glutamine 355. Positions 431, 435, and 502 each coordinate GTP. Residue lysine 502 coordinates dGTP. The tract at residues 571–622 (TPLKQDWHAREDEDEEEEEKHRQNQTLPHHTPQRTGRNVKVDLFQARGETKL) is disordered. Positions 594 to 606 (NQTLPHHTPQRTG) are enriched in polar residues.

It belongs to the SAMHD1 family. Homodimer; in absence of GTP and dNTP. Homotetramer; in GTP- and dNTP-bound form. Interacts with rbbp8/CtIP. Zn(2+) serves as cofactor.

The protein localises to the nucleus. The protein resides in the chromosome. It carries out the reaction a 2'-deoxyribonucleoside 5'-triphosphate + H2O = a 2'-deoxyribonucleoside + triphosphate + H(+). The catalysed reaction is dATP + H2O = 2'-deoxyadenosine + triphosphate + H(+). It catalyses the reaction dCTP + H2O = 2'-deoxycytidine + triphosphate + H(+). The enzyme catalyses dGTP + H2O = 2'-deoxyguanosine + triphosphate + H(+). It carries out the reaction dTTP + H2O = thymidine + triphosphate + H(+). With respect to regulation, allosterically activated and regulated via the combined actions of GTP and dNTPs (dATP, dGTP, dTTP and dCTP): Allosteric site 1 binds GTP, while allosteric site 2 binds dNTP. Allosteric activation promotes the formation of highly active homotetramers. In terms of biological role, protein that acts both as a host restriction factor involved in defense response to virus and as a regulator of DNA end resection at stalled replication forks. Has deoxynucleoside triphosphate (dNTPase) activity, which is required to restrict infection by viruses: dNTPase activity reduces cellular dNTP levels to levels too low for retroviral reverse transcription to occur, blocking early-stage virus replication in dendritic and other myeloid cells. Functions during S phase at stalled DNA replication forks to promote the resection of gapped or reversed forks: acts by stimulating the exonuclease activity of MRE11, activating the ATR-CHK1 pathway and allowing the forks to restart replication. Its ability to promote degradation of nascent DNA at stalled replication forks is required to prevent induction of type I interferons, thereby preventing chronic inflammation. Ability to promote DNA end resection at stalled replication forks is independent of dNTPase activity. In Danio rerio (Zebrafish), this protein is Deoxynucleoside triphosphate triphosphohydrolase SAMHD1.